The chain runs to 184 residues: ADP-ribosylation factor-like protein 8b (184 aa).

The segment at residues M1 to Q18 is an intramembrane region (note=Mediates targeting to membranes). GTP contacts are provided by residues N29–S34, M48–T51, D70–Q74, and N129–D132.

The protein belongs to the small GTPase superfamily. Arf family. In terms of assembly, interacts with tubulin.

It localises to the late endosome membrane. Its subcellular location is the lysosome membrane. It is found in the cytoplasm. The protein resides in the cytoskeleton. The protein localises to the spindle. Its function is as follows. May play a role in lysosome motility. May play a role in chromosome segregation. Functionally, (Microbial infection) Component of tomato mosaic virus (ToMV) RNA replication complexes. Required for tobamovirus multiplication, especially for efficient negative-strand RNA synthesis and viral RNA capping. The protein is ADP-ribosylation factor-like protein 8b of Arabidopsis thaliana (Mouse-ear cress).